Here is a 359-residue protein sequence, read N- to C-terminus: Outer membrane protein P5 (359 aa).

Positions 1-21 (MKKTAIALVVAGLAAASVAQA) are cleaved as a signal peptide. The next 8 membrane-spanning stretches (beta stranded) occupy residues 27–37 (TFYAGVKAGQG), 64–75 (TFTYGVFGGYQI), 83–91 (LAAELGYDD), 110–121 (HGAYLSLKGSYE), 126–134 (LDVYGKAGV), 164–173 (GLFAVGAEYA), 178–185 (LAVRLEYQ), and 211–219 (CINAGISYR). The OmpA-like domain maps to 233-359 (MVSKTFSLNS…RVEIAVNGTK (127 aa)). C332 and C344 are disulfide-bonded.

The protein belongs to the outer membrane OOP (TC 1.B.6) superfamily. OmpA family. Monomer and homodimer.

It is found in the cell outer membrane. The protein localises to the fimbrium. Acts as a fimbriae subunit, allowing adhesion to host cells. In terms of biological role, with TolR probably plays a role in maintaining the position of the peptidoglycan cell wall in the periplasm. Acts as a porin with low permeability that allows slow penetration of small solutes; an internal gate slows down solute passage. This Haemophilus influenzae protein is Outer membrane protein P5.